A 452-amino-acid chain; its full sequence is Sensor histidine kinase HprS (452 aa).

Residues 1 to 9 (MKRLSITVR) are Cytoplasmic-facing. The helical transmembrane segment at 10–30 (LTLLFILLLSVAGAGIVWTLY) threads the bilayer. At 31–158 (NGLASELKWR…ARHNMLEQYK (128 aa)) the chain is on the periplasmic side. Residues 159-179 (INSIIICIVAIVLCSVLSPLL) form a helical membrane-spanning segment. At 180 to 452 (IRTGLREIKK…VFRITLPQRN (273 aa)) the chain is on the cytoplasmic side. Residues 181 to 234 (RTGLREIKKLSGVTEALNYNDSREPVEVSALPRELKPLGQALNKMHHALVKDFE) form the HAMP domain. Positions 242-452 (DLAHELRTPI…VFRITLPQRN (211 aa)) constitute a Histidine kinase domain. H245 carries the post-translational modification Phosphohistidine; by autocatalysis.

Post-translationally, autophosphorylated.

Its subcellular location is the cell inner membrane. The catalysed reaction is ATP + protein L-histidine = ADP + protein N-phospho-L-histidine.. In terms of biological role, member of a two-component regulatory system HprR/HprS involved in response to hydrogen peroxide. Senses H(2)O(2), maybe via the redox state of the membrane. Activates HprR by phosphorylation. Can also phosphorylate CusR. In Escherichia coli (strain K12), this protein is Sensor histidine kinase HprS.